Consider the following 254-residue polypeptide: Alcohol dehydrogenase 2 (254 aa).

An NAD(+)-binding site is contributed by 10–33 (FVAGLGGIGFDTSREIVKSGPKNL). A substrate-binding site is contributed by serine 138. Tyrosine 151 acts as the Proton acceptor in catalysis.

It belongs to the short-chain dehydrogenases/reductases (SDR) family. As to quaternary structure, homodimer.

It carries out the reaction a primary alcohol + NAD(+) = an aldehyde + NADH + H(+). The enzyme catalyses a secondary alcohol + NAD(+) = a ketone + NADH + H(+). This Drosophila buzzatii (Fruit fly) protein is Alcohol dehydrogenase 2 (Adh2).